The sequence spans 211 residues: Dephospho-CoA kinase (211 aa).

Residues 7 to 211 (LIGVIGRSGA…ILTRRGVLGE (205 aa)) form the DPCK domain. Residue 15–20 (GAGKNV) participates in ATP binding.

The protein belongs to the CoaE family.

The protein resides in the cytoplasm. It carries out the reaction 3'-dephospho-CoA + ATP = ADP + CoA + H(+). The protein operates within cofactor biosynthesis; coenzyme A biosynthesis; CoA from (R)-pantothenate: step 5/5. Catalyzes the phosphorylation of the 3'-hydroxyl group of dephosphocoenzyme A to form coenzyme A. The polypeptide is Dephospho-CoA kinase (Treponema pallidum (strain Nichols)).